A 308-amino-acid polypeptide reads, in one-letter code: Ava biosynthesis cluster protein O (308 aa).

It functions in the pathway secondary metabolite biosynthesis. In terms of biological role, part of the cluster that mediates the biosynthesis of a highly modified cyclo-arginine-tryptophan dipeptide (cRW). The first step of the pathway is perfornmed by the arginine-containing cyclodipeptide synthase (RCPDS) avaA that acts as the scaffold-generating enzyme and is responsible for formation of the cyclo-Arg-Trp (cRW) diketopiperazine. AvaB then acts as a multifunctional flavoenzyme that is responsible for generating the cyclo-Arg-formylkynurenine DKP, which can be deformylated by avaC. AvaB then further catalyzes an additional N-oxidation followed by cyclization and dehydration. The next step is an N-acetylation of the guanidine group catalyzed by the arginine N-acetyltransferase avaD. The roles of the additional enzymes identified within the ava cluster still have to be determined. In Aspergillus versicolor, this protein is Ava biosynthesis cluster protein O.